Reading from the N-terminus, the 462-residue chain is ATP-dependent protease ATPase subunit HslU (462 aa).

ATP-binding positions include Ile21, 63 to 68 (GVGKTE), Asp275, Glu340, and Arg412.

This sequence belongs to the ClpX chaperone family. HslU subfamily. In terms of assembly, a double ring-shaped homohexamer of HslV is capped on each side by a ring-shaped HslU homohexamer. The assembly of the HslU/HslV complex is dependent on binding of ATP.

The protein localises to the cytoplasm. In terms of biological role, ATPase subunit of a proteasome-like degradation complex; this subunit has chaperone activity. The binding of ATP and its subsequent hydrolysis by HslU are essential for unfolding of protein substrates subsequently hydrolyzed by HslV. HslU recognizes the N-terminal part of its protein substrates and unfolds these before they are guided to HslV for hydrolysis. The chain is ATP-dependent protease ATPase subunit HslU from Pseudothermotoga lettingae (strain ATCC BAA-301 / DSM 14385 / NBRC 107922 / TMO) (Thermotoga lettingae).